An 872-amino-acid polypeptide reads, in one-letter code: Alanine--tRNA ligase (872 aa).

Zn(2+)-binding residues include H566, H570, C668, and H672.

The protein belongs to the class-II aminoacyl-tRNA synthetase family. Requires Zn(2+) as cofactor.

It is found in the cytoplasm. The enzyme catalyses tRNA(Ala) + L-alanine + ATP = L-alanyl-tRNA(Ala) + AMP + diphosphate. Catalyzes the attachment of alanine to tRNA(Ala) in a two-step reaction: alanine is first activated by ATP to form Ala-AMP and then transferred to the acceptor end of tRNA(Ala). Also edits incorrectly charged Ser-tRNA(Ala) and Gly-tRNA(Ala) via its editing domain. The polypeptide is Alanine--tRNA ligase (Lactococcus lactis subsp. cremoris (strain SK11)).